We begin with the raw amino-acid sequence, 328 residues long: Malate dehydrogenase (328 aa).

12 to 18 (GAAGQIG) is an NAD(+) binding site. The substrate site is built by R95 and R101. Residues N108, Q115, and 132 to 134 (VGN) each bind NAD(+). The substrate site is built by N134 and R165. The active-site Proton acceptor is the H190.

The protein belongs to the LDH/MDH superfamily. MDH type 2 family.

It catalyses the reaction (S)-malate + NAD(+) = oxaloacetate + NADH + H(+). Functionally, catalyzes the reversible oxidation of malate to oxaloacetate. The polypeptide is Malate dehydrogenase (Delftia acidovorans (strain DSM 14801 / SPH-1)).